Consider the following 251-residue polypeptide: tRNA-cytidine(32) 2-sulfurtransferase 2 (251 aa).

Residues 33-38 carry the PP-loop motif motif; it reads SGGKDS. Cys-108, Cys-111, and Cys-199 together coordinate [4Fe-4S] cluster.

This sequence belongs to the TtcA family. In terms of assembly, homodimer. It depends on Mg(2+) as a cofactor. [4Fe-4S] cluster is required as a cofactor.

Its subcellular location is the cytoplasm. It carries out the reaction cytidine(32) in tRNA + S-sulfanyl-L-cysteinyl-[cysteine desulfurase] + AH2 + ATP = 2-thiocytidine(32) in tRNA + L-cysteinyl-[cysteine desulfurase] + A + AMP + diphosphate + H(+). It participates in tRNA modification. In terms of biological role, catalyzes the ATP-dependent 2-thiolation of cytidine in position 32 of tRNA, to form 2-thiocytidine (s(2)C32). The sulfur atoms are provided by the cysteine/cysteine desulfurase (IscS) system. The chain is tRNA-cytidine(32) 2-sulfurtransferase 2 from Francisella tularensis subsp. tularensis (strain FSC 198).